The following is a 567-amino-acid chain: Interferon lambda receptor 1 (567 aa).

A signal peptide spans methionine 1–glycine 22. Residues glutamine 23–serine 229 are Extracellular-facing. In terms of domain architecture, Fibronectin type-III spans proline 26–aspartate 121. Asparagine 29 carries N-linked (GlcNAc...) asparagine glycosylation. 3 disulfide bridges follow: cysteine 74–cysteine 82, cysteine 86–cysteine 149, and cysteine 193–cysteine 215. N-linked (GlcNAc...) asparagine glycosylation occurs at asparagine 141. Residues alanine 230–leucine 250 form a helical membrane-spanning segment. At lysine 251–serine 567 the chain is on the cytoplasmic side.

The protein belongs to the type II cytokine receptor family. In terms of assembly, heterodimer with IL10RB.

It localises to the membrane. Functionally, the IFNLR1/IL10RB dimer is a receptor for the cytokine ligands IFNL2 and IFNL3 and mediates their antiviral activity. The ligand/receptor complex stimulate the activation of the JAK/STAT signaling pathway leading to the expression of IFN-stimulated genes (ISG), which contribute to the antiviral state. Determines the cell type specificity of the lambda interferon action. Shows a more restricted pattern of expression in the epithelial tissues thereby limiting responses to lambda interferons primarily to epithelial cells of the respiratory, gastrointestinal, and reproductive tracts. In Gallus gallus (Chicken), this protein is Interferon lambda receptor 1 (IFNLR1).